The chain runs to 199 residues: Recombination protein RecR (199 aa).

The C4-type zinc-finger motif lies at 57–72 (CQSCRTFTEQDLCPIC). The region spanning 81 to 176 (GIICVVETPA…VISRIAHGVP (96 aa)) is the Toprim domain.

Belongs to the RecR family.

Its function is as follows. May play a role in DNA repair. It seems to be involved in an RecBC-independent recombinational process of DNA repair. It may act with RecF and RecO. The protein is Recombination protein RecR of Shewanella frigidimarina (strain NCIMB 400).